A 247-amino-acid chain; its full sequence is 3-deoxy-manno-octulosonate cytidylyltransferase (247 aa).

This sequence belongs to the KdsB family.

Its subcellular location is the cytoplasm. The catalysed reaction is 3-deoxy-alpha-D-manno-oct-2-ulosonate + CTP = CMP-3-deoxy-beta-D-manno-octulosonate + diphosphate. It functions in the pathway nucleotide-sugar biosynthesis; CMP-3-deoxy-D-manno-octulosonate biosynthesis; CMP-3-deoxy-D-manno-octulosonate from 3-deoxy-D-manno-octulosonate and CTP: step 1/1. The protein operates within bacterial outer membrane biogenesis; lipopolysaccharide biosynthesis. Functionally, activates KDO (a required 8-carbon sugar) for incorporation into bacterial lipopolysaccharide in Gram-negative bacteria. This Chlorobium phaeobacteroides (strain DSM 266 / SMG 266 / 2430) protein is 3-deoxy-manno-octulosonate cytidylyltransferase.